The primary structure comprises 245 residues: Ribosomal RNA large subunit methyltransferase E (245 aa).

S-adenosyl-L-methionine contacts are provided by glycine 83, tryptophan 85, aspartate 111, aspartate 127, and aspartate 156. The Proton acceptor role is filled by lysine 196.

It belongs to the class I-like SAM-binding methyltransferase superfamily. RNA methyltransferase RlmE family.

It localises to the cytoplasm. The enzyme catalyses uridine(2552) in 23S rRNA + S-adenosyl-L-methionine = 2'-O-methyluridine(2552) in 23S rRNA + S-adenosyl-L-homocysteine + H(+). Functionally, specifically methylates the uridine in position 2552 of 23S rRNA at the 2'-O position of the ribose in the fully assembled 50S ribosomal subunit. This is Ribosomal RNA large subunit methyltransferase E from Polaromonas naphthalenivorans (strain CJ2).